The following is a 949-amino-acid chain: Protocadherin alpha-11 (949 aa).

A signal peptide spans 1-29 (MFGFQRRGLGTPRLQLWLLLLEFWEVGSG). 6 Cadherin domains span residues 30-133 (QLHY…PPVF), 157-242 (ASDA…DPDF), 243-349 (DKSE…SPEV), 350-454 (AVTS…APAF), 455-564 (AQPE…APAL), and 580-677 (VPRS…APKA). The Extracellular segment spans residues 30–696 (QLHYSVSEEA…SPEAALVDVN (667 aa)). Asparagine 265 and asparagine 304 each carry an N-linked (GlcNAc...) asparagine glycan. N-linked (GlcNAc...) asparagine glycosylation occurs at asparagine 547. A helical transmembrane segment spans residues 697-717 (VYLIIAICVVSSLLVLTLLLY). Residues 718–949 (TALWCSATPT…GNSTTDNSDQ (232 aa)) are Cytoplasmic-facing. PXXP repeat units follow at residues 733-736 (PGKP) and 773-776 (PSLP). The tract at residues 733–893 (PGKPTLVCSR…PDKFIIPGSP (161 aa)) is 6 X 4 AA repeats of P-X-X-P. 3 disordered regions span residues 753-807 (RRQR…DWRY), 826-858 (ILRA…PPVG), and 870-889 (YGPG…KFII). The segment covering 780–789 (NKEEEGERQE) has biased composition (basic and acidic residues). PXXP repeat units lie at residues 795 to 798 (PGQP), 831 to 834 (PGGP), 872 to 875 (PGNP), and 890 to 893 (PGSP). Positions 900 to 949 (QEPANSQIDKSDFITFGKKEETKKKKKKKKGNKTQEKKEKGNSTTDNSDQ) are disordered. Over residues 908 to 922 (DKSDFITFGKKEETK) the composition is skewed to basic and acidic residues.

The protein localises to the cell membrane. In terms of biological role, potential calcium-dependent cell-adhesion protein. May be involved in the establishment and maintenance of specific neuronal connections in the brain. This Pan troglodytes (Chimpanzee) protein is Protocadherin alpha-11 (PCDHA11).